The chain runs to 277 residues: Ribosomal RNA small subunit methyltransferase G (277 aa).

Residues Gly-128, Phe-133, 188-189, and Arg-198 contribute to the S-adenosyl-L-methionine site; that span reads SE.

The protein belongs to the methyltransferase superfamily. RNA methyltransferase RsmG family.

Its subcellular location is the cytoplasm. The enzyme catalyses guanosine(527) in 16S rRNA + S-adenosyl-L-methionine = N(7)-methylguanosine(527) in 16S rRNA + S-adenosyl-L-homocysteine. Its function is as follows. Specifically methylates the N7 position of guanine in position 527 of 16S rRNA. In Nitrobacter winogradskyi (strain ATCC 25391 / DSM 10237 / CIP 104748 / NCIMB 11846 / Nb-255), this protein is Ribosomal RNA small subunit methyltransferase G.